We begin with the raw amino-acid sequence, 214 residues long: Pyrrolidone-carboxylate peptidase (214 aa).

Residues glutamate 79, cysteine 142, and histidine 166 contribute to the active site.

Belongs to the peptidase C15 family. As to quaternary structure, homotetramer.

It is found in the cytoplasm. It catalyses the reaction Release of an N-terminal pyroglutamyl group from a polypeptide, the second amino acid generally not being Pro.. In terms of biological role, removes 5-oxoproline from various penultimate amino acid residues except L-proline. The polypeptide is Pyrrolidone-carboxylate peptidase (Fusobacterium nucleatum subsp. nucleatum (strain ATCC 25586 / DSM 15643 / BCRC 10681 / CIP 101130 / JCM 8532 / KCTC 2640 / LMG 13131 / VPI 4355)).